We begin with the raw amino-acid sequence, 293 residues long: 33 kDa chaperonin (293 aa).

2 cysteine pairs are disulfide-bonded: cysteine 239–cysteine 241 and cysteine 272–cysteine 275.

This sequence belongs to the HSP33 family. In terms of processing, under oxidizing conditions two disulfide bonds are formed involving the reactive cysteines. Under reducing conditions zinc is bound to the reactive cysteines and the protein is inactive.

It localises to the cytoplasm. Functionally, redox regulated molecular chaperone. Protects both thermally unfolding and oxidatively damaged proteins from irreversible aggregation. Plays an important role in the bacterial defense system toward oxidative stress. This Limosilactobacillus fermentum (strain NBRC 3956 / LMG 18251) (Lactobacillus fermentum) protein is 33 kDa chaperonin.